The chain runs to 64 residues: Large ribosomal subunit protein bL32 (64 aa).

The segment at 1 to 28 (MAVQKSRVTPSRRGQRRSHDALTAKKLS) is disordered.

Belongs to the bacterial ribosomal protein bL32 family.

The protein is Large ribosomal subunit protein bL32 (rpmF) of Xylella fastidiosa (strain 9a5c).